A 315-amino-acid chain; its full sequence is High mobility group protein hmg-12 (315 aa).

Residues 57-315 (VKNETDSEAV…AIDAFFDGSD (259 aa)) are disordered. Residues 77 to 86 (ANDSPANTND) show a composition bias toward polar residues. Residues 118–128 (PVKKGRGRPIK) constitute a DNA-binding region (a.T hook 1). Low complexity-rich tracts occupy residues 147-160 (AQTP…IDTA) and 196-205 (AADTDAIDTA).

It belongs to the HMGA family.

Its subcellular location is the nucleus. Its function is as follows. Transcriptional regulator. Binds to specific sequence motifs in regulatory elements. May recruit transcription factors, or may induce structural changes in chromatin, to thereby modulate embryonic expression of ATP-dependent chaperone cdc-48.1. The chain is High mobility group protein hmg-12 from Caenorhabditis elegans.